The sequence spans 295 residues: Ethanolamine ammonia-lyase small subunit (295 aa).

Residues valine 207, glutamate 228, and cysteine 258 each contribute to the adenosylcob(III)alamin site.

The protein belongs to the EutC family. In terms of assembly, the basic unit is a heterodimer which dimerizes to form tetramers. The heterotetramers trimerize; 6 large subunits form a core ring with 6 small subunits projecting outwards. Adenosylcob(III)alamin is required as a cofactor.

It is found in the bacterial microcompartment. It catalyses the reaction ethanolamine = acetaldehyde + NH4(+). Its pathway is amine and polyamine degradation; ethanolamine degradation. In terms of biological role, catalyzes the deamination of various vicinal amino-alcohols to oxo compounds. Allows this organism to utilize ethanolamine as the sole source of nitrogen and carbon in the presence of external vitamin B12. In Escherichia coli (strain UTI89 / UPEC), this protein is Ethanolamine ammonia-lyase small subunit.